Consider the following 165-residue polypeptide: Phosphopantetheine adenylyltransferase (165 aa).

S9 contributes to the substrate binding site. ATP contacts are provided by residues 9-10 (SF) and H17. Positions 41, 73, and 87 each coordinate substrate. ATP-binding positions include 88-90 (GLR), E98, and 123-129 (FTLLSSS).

The protein belongs to the bacterial CoaD family. In terms of assembly, homohexamer. It depends on Mg(2+) as a cofactor.

It is found in the cytoplasm. It catalyses the reaction (R)-4'-phosphopantetheine + ATP + H(+) = 3'-dephospho-CoA + diphosphate. The protein operates within cofactor biosynthesis; coenzyme A biosynthesis; CoA from (R)-pantothenate: step 4/5. Reversibly transfers an adenylyl group from ATP to 4'-phosphopantetheine, yielding dephospho-CoA (dPCoA) and pyrophosphate. This chain is Phosphopantetheine adenylyltransferase, found in Herpetosiphon aurantiacus (strain ATCC 23779 / DSM 785 / 114-95).